The sequence spans 2615 residues: Probable serine/threonine-protein kinase roco7 (2615 aa).

The span at 1 to 13 shows a compositional bias: low complexity; the sequence is MDGYSSLSSSGNS. Disordered stretches follow at residues 1–35, 275–297, 533–623, and 946–998; these read MDGY…NYNQ, STPT…NSNN, QNIN…GGLN, and SSSS…ISEQ. Composition is skewed to low complexity over residues 533–560, 567–614, and 946–996; these read QNIN…SSRS, NSST…NNNN, and SSSS…SNIS. Positions 1441 to 1631 constitute a COR domain; it reads SVKEAYARNK…LCIWQNGMVL (191 aa). A Protein kinase domain is found at 1775-2042; that stretch reads LKFGPQLGSG…ERLSTMQKTF (268 aa). ATP-binding positions include 1781 to 1789 and Lys1802; that span reads LGSGSYANV. Asp1899 functions as the Proton acceptor in the catalytic mechanism. Disordered regions lie at residues 2061–2158 and 2176–2209; these read QINQ…SHSG and GIGS…YESG. Composition is skewed to low complexity over residues 2073–2158 and 2182–2209; these read SQAA…SHSG and NQHQ…YESG. 2 WD repeats span residues 2491–2527 and 2533–2574; these read GIIK…LVWD and RMVQ…TTYS.

This sequence belongs to the protein kinase superfamily. TKL Ser/Thr protein kinase family. ROCO subfamily.

It carries out the reaction L-seryl-[protein] + ATP = O-phospho-L-seryl-[protein] + ADP + H(+). The enzyme catalyses L-threonyl-[protein] + ATP = O-phospho-L-threonyl-[protein] + ADP + H(+). The protein is Probable serine/threonine-protein kinase roco7 (roco7) of Dictyostelium discoideum (Social amoeba).